A 560-amino-acid polypeptide reads, in one-letter code: Calcium-binding and coiled-coil domain-containing protein 1-A (560 aa).

Coiled-coil stretches lie at residues 156-192 (KATFLQNQLEMAQKERNDLMRARLALEEEVISKEKRI) and 367-480 (WWQE…DKML). Positions 480 to 517 (LMEDKTDSSPPTLSVDLSDSDDESPGDEGVSQQLGPCS) are disordered. Residues 487 to 496 (SSPPTLSVDL) show a composition bias toward low complexity.

The protein belongs to the CALCOCO family.

Its subcellular location is the cytoplasm. It localises to the nucleus. May function as a coactivator for aryl hydrocarbon and nuclear receptors. This chain is Calcium-binding and coiled-coil domain-containing protein 1-A (calcoco1-a), found in Xenopus laevis (African clawed frog).